Reading from the N-terminus, the 370-residue chain is Sphingolipid delta(4)-desaturase (370 aa).

The next 3 helical transmembrane spans lie at 68–88, 92–112, and 128–148; these read VMGVVLLQLGIAYYLRHTPVF, FLTLAYVIGATANQAIFLAIH, and LFAVFANIPIGVPYSASFQPY. The Histidine box-1 motif lies at 112–116; it reads HELSH. A Histidine box-2 motif is present at residues 149–153; the sequence is HQLHH. Helical transmembrane passes span 173–193, 197–217, and 220–240; these read FLSSMPGKLFFAIFQIFFYAL, FITQIKFTYVHLVNVVFQLIF, and VMVTCWGWKALGYFIVSTFLA. Residues 299-303 carry the Histidine box-3 motif; the sequence is HNEHH.

It belongs to the fatty acid desaturase type 1 family. DEGS subfamily.

The protein resides in the membrane. The catalysed reaction is an N-acylsphinganine + 2 Fe(II)-[cytochrome b5] + O2 + 2 H(+) = an N-acylsphing-4-enine + 2 Fe(III)-[cytochrome b5] + 2 H2O. Its pathway is lipid metabolism; sphingolipid metabolism. Functionally, delta(4)-fatty-acid desaturase which introduces a double bond at the 4-position in the long-chain base (LCB) of ceramides. Required for the formation of the monounsaturated sphingoid base (E)-sphing-4-enine during glucosylceramide (GluCer) biosynthesis. This is Sphingolipid delta(4)-desaturase from Candida albicans (strain SC5314 / ATCC MYA-2876) (Yeast).